Reading from the N-terminus, the 418-residue chain is Tyrosine--tRNA ligase (418 aa).

L-tyrosine is bound at residue Y35. A 'HIGH' region motif is present at residues 40 to 49 (PTAKSLHIGH). 2 residues coordinate L-tyrosine: Y168 and Q172. The 'KMSKS' region signature appears at 228 to 232 (KYGKT). K231 provides a ligand contact to ATP. The 59-residue stretch at 352-410 (PTVVGAMVAAGVVDTKSGGRRAVAEGGAYLNNVKVADPDQRLTDDDFLCGRVALVRRGK) folds into the S4 RNA-binding domain.

It belongs to the class-I aminoacyl-tRNA synthetase family. TyrS type 1 subfamily. In terms of assembly, homodimer.

It localises to the cytoplasm. It catalyses the reaction tRNA(Tyr) + L-tyrosine + ATP = L-tyrosyl-tRNA(Tyr) + AMP + diphosphate + H(+). In terms of biological role, catalyzes the attachment of tyrosine to tRNA(Tyr) in a two-step reaction: tyrosine is first activated by ATP to form Tyr-AMP and then transferred to the acceptor end of tRNA(Tyr). The chain is Tyrosine--tRNA ligase from Cutibacterium acnes (strain DSM 16379 / KPA171202) (Propionibacterium acnes).